The sequence spans 265 residues: MFKRIREIKEKEQEELVRKISELLALERELERKLEELLREYDRKSQSVNTLNEIFKLKAITRKIEETVDYLEELNVKKEELKEKYLELKGEIKSIEILEERKKREKIKKEIAVSLQELGFMHLVKKIIPVFFMFFSFLFSESATQKALKDSINLKEDYKVLLKLIEEKLKKLEEERKKLEALQKTPLTEEEKKKLEKLIKSVEKAPADEIAPAIENLPPKLAAEILLRIKERKAGQILANMNPQKASEIMKYILERNPSFNAQVD.

Positions 143-205 (ATQKALKDSI…EKLIKSVEKA (63 aa)) form a coiled coil.

This is an uncharacterized protein from Aquifex aeolicus (strain VF5).